The sequence spans 107 residues: Large ribosomal subunit protein P1 (107 aa).

Positions glycine 67–proline 82 are enriched in low complexity. Residues glycine 67–aspartate 107 form a disordered region. Residues lysine 90–methionine 101 are compositionally biased toward acidic residues.

Belongs to the eukaryotic ribosomal protein P1/P2 family. As to quaternary structure, P1 and P2 exist as dimers at the large ribosomal subunit.

It localises to the cytoplasm. Its function is as follows. Plays an important role in the elongation step of protein synthesis. This Penicillium crustosum (Blue mold fungus) protein is Large ribosomal subunit protein P1.